The sequence spans 372 residues: Galanin receptor type 2 (372 aa).

The Extracellular portion of the chain corresponds to 1–28; that stretch reads MNGSGSQGAENTSQEGGSGGWQPEAVLV. Asparagine 2 and asparagine 11 each carry an N-linked (GlcNAc...) asparagine glycan. Residues 29-49 form a helical membrane-spanning segment; that stretch reads PLFFALIFLVGTVGNALVLAV. Residues 50-60 are Cytoplasmic-facing; it reads LLRGGQAVSTT. Residues 61-81 traverse the membrane as a helical segment; that stretch reads NLFILNLGVADLCFILCCVPF. The Extracellular segment spans residues 82–99; it reads QATIYTLDDWVFGSLLCK. A disulfide bridge links cysteine 98 with cysteine 175. A helical membrane pass occupies residues 100-121; sequence AVHFLIFLTMHASSFTLAAVSL. Residues 122 to 141 lie on the Cytoplasmic side of the membrane; it reads DRYLAIRYPLHSRELRTPRN. A helical membrane pass occupies residues 142–162; that stretch reads ALAAIGLIWGLALLFSGPYLS. Residues 163-187 are Extracellular-facing; it reads YYRQSQLANLTVCHPAWSAPRRRAM. The chain crosses the membrane as a helical span at residues 188-208; it reads DLCTFVFSYLLPVLVLSLTYA. The Cytoplasmic segment spans residues 209–237; the sequence is RTLRYLWRTVDPVTAGSGSQRAKRKVTRM. A helical transmembrane segment spans residues 238-258; the sequence is IIIVAVLFCLCWMPHHALILC. The Extracellular segment spans residues 259–260; sequence VW. A helical transmembrane segment spans residues 261–281; that stretch reads FGRFPLTRATYALRILSHLVS. Topologically, residues 282 to 372 are cytoplasmic; that stretch reads YANSCVNPIV…ASSRTLDPAC (91 aa). The segment at 353–372 is disordered; sequence VPPPALPNCTASSRTLDPAC. Positions 361-372 are enriched in polar residues; the sequence is CTASSRTLDPAC.

This sequence belongs to the G-protein coupled receptor 1 family.

The protein localises to the cell membrane. Functionally, receptor for the hormone galanin, GALP and spexin-1. The activity of this receptor is mediated by G proteins that activate the phospholipase C/protein kinase C pathway (via G(q)) and that inhibit adenylyl cyclase (via G(i)). The protein is Galanin receptor type 2 (Galr2) of Rattus norvegicus (Rat).